Reading from the N-terminus, the 463-residue chain is Exodeoxyribonuclease 7 large subunit (463 aa).

Belongs to the XseA family. In terms of assembly, heterooligomer composed of large and small subunits.

The protein localises to the cytoplasm. The enzyme catalyses Exonucleolytic cleavage in either 5'- to 3'- or 3'- to 5'-direction to yield nucleoside 5'-phosphates.. In terms of biological role, bidirectionally degrades single-stranded DNA into large acid-insoluble oligonucleotides, which are then degraded further into small acid-soluble oligonucleotides. The protein is Exodeoxyribonuclease 7 large subunit of Bordetella pertussis (strain Tohama I / ATCC BAA-589 / NCTC 13251).